A 312-amino-acid polypeptide reads, in one-letter code: Malate dehydrogenase (312 aa).

Residues 7–13 (GAAGGIG) and D34 contribute to the NAD(+) site. Residues R81 and R87 each coordinate substrate. NAD(+) contacts are provided by residues N94 and 117–119 (ITN). The substrate site is built by N119 and R153. H177 acts as the Proton acceptor in catalysis. M227 lines the NAD(+) pocket.

This sequence belongs to the LDH/MDH superfamily. MDH type 1 family. In terms of assembly, homodimer.

The enzyme catalyses (S)-malate + NAD(+) = oxaloacetate + NADH + H(+). Functionally, catalyzes the reversible oxidation of malate to oxaloacetate. The sequence is that of Malate dehydrogenase from Pectobacterium carotovorum subsp. carotovorum (strain PC1).